The chain runs to 279 residues: Four and a half LIM domains protein 2 (279 aa).

The segment at 7 to 31 (CHHCEDSLFGRKYVLREEQPYCVAC) adopts a C4-type zinc-finger fold. 3 LIM zinc-binding domains span residues 40-92 (CEEC…CTDC), 101-153 (CQEC…CVPC), and 162-212 (CVQC…CLGC). Lys78 participates in a covalent cross-link: Glycyl lysine isopeptide (Lys-Gly) (interchain with G-Cter in SUMO2). Glycyl lysine isopeptide (Lys-Gly) (interchain with G-Cter in SUMO2) cross-links involve residues Lys167 and Lys220. The region spanning 221-275 (CAGCANPISGLGGTKYISFEERQWHNDCFNCKKCSLSLVGRGFLTERDDILCPDC) is the LIM zinc-binding 4 domain. Residue Ser238 is modified to Phosphoserine.

Interacts with ZNF638 and TTN/titin. Interacts with E4F1. Interacts with GRB7. Interacts with SIRT1 and FOXO1. Interacts with CEFIP and calcineurin. Interacts with FOXK1.

It localises to the cytoplasm. Its subcellular location is the nucleus. The protein resides in the myofibril. It is found in the sarcomere. The protein localises to the z line. May function as a molecular transmitter linking various signaling pathways to transcriptional regulation. Negatively regulates the transcriptional repressor E4F1 and may function in cell growth. Inhibits the transcriptional activity of FOXO1 and its apoptotic function by enhancing the interaction of FOXO1 with SIRT1 and FOXO1 deacetylation. Negatively regulates the calcineurin/NFAT signaling pathway in cardiomyocytes. This chain is Four and a half LIM domains protein 2 (FHL2), found in Bos taurus (Bovine).